A 604-amino-acid chain; its full sequence is Elongation factor 4 (604 aa).

Residues 10-191 (KNIRNFSIIA…KIITTIPAPS (182 aa)) form the tr-type G domain. GTP contacts are provided by residues 22 to 27 (DHGKST) and 138 to 141 (NKID).

Belongs to the TRAFAC class translation factor GTPase superfamily. Classic translation factor GTPase family. LepA subfamily.

The protein resides in the cell inner membrane. The enzyme catalyses GTP + H2O = GDP + phosphate + H(+). Its function is as follows. Required for accurate and efficient protein synthesis under certain stress conditions. May act as a fidelity factor of the translation reaction, by catalyzing a one-codon backward translocation of tRNAs on improperly translocated ribosomes. Back-translocation proceeds from a post-translocation (POST) complex to a pre-translocation (PRE) complex, thus giving elongation factor G a second chance to translocate the tRNAs correctly. Binds to ribosomes in a GTP-dependent manner. The chain is Elongation factor 4 from Helicobacter pylori (strain P12).